A 597-amino-acid polypeptide reads, in one-letter code: METVDSRNKLHSRLRLWEFPDQYIIEPADGSGSSCLDISRVDASMKLIDQVPESNSVRVPKIRSIFGVVGMLKLLAGSYLVVVTESERVGSFLGHPIFKVTTLKVLPCDHSLKNSPEEQKKMETEFSKLLSVAEKTTGLYFSYEVNLTLSSQRLHEMGDESKSLPLWRQAEPRFLWNNYMLEVLIDNKLDQFLLPVIQGSFNSFETAIGRDIVDITLIARRCTRRNGTRMWRRGADLDGYVANFVETEQIVQMNGYTSSFVQVRGSMPFMWEQVVDLTYKPKFEIVQPEEAKRIAERHFLDLRKKYGSVLAVDLVNKQGGEGRLCEKYATVMQHITGDDIRYLHFDFHQICGHIHFERLSILYEQIEGFLEKNGYFLLNEKGEKMKEQLGVVRSNCIDCLDRTNVTQSMIGRKMLEVQLKRIGVFGAEETISSHLNFDEHYKILWANHGDEISIQYSGTPALKGDFVRYGHRTAHGVLKDGWSSLRRYYLNNFADGTKQDAIDLLQGHYIVAVSRDMAPVPQKGGLEAVANFPVALFVVLMSFWFATMSLKQTGSDYKHKHLFFSLLWTGICVGMAALVRANGRIFCNRPRLHKPRG.

The SAC domain maps to 130 to 458 (LSVAEKTTGL…GDEISIQYSG (329 aa)). The Phosphatase catalytic core motif lies at 393-404 (RSNCIDCLDRTN). Transmembrane regions (helical) follow at residues 528–548 (AVAN…FATM) and 559–579 (HKHL…AALV).

As to expression, ubiquitous.

Its subcellular location is the endoplasmic reticulum membrane. It localises to the cytoplasmic vesicle membrane. Its function is as follows. Phosphoinositide phosphatase that preferentially hydrolyzes PtdIns(4)P. Regulates the accumulation of PtdIns(4)P on membrane compartments at the tips of growing root hairs leading to proper root hair development. The polypeptide is Phosphoinositide phosphatase SAC7 (SAC7) (Arabidopsis thaliana (Mouse-ear cress)).